The following is a 154-amino-acid chain: MKSRTGALPSRKQIALIAHDNKKQELSDWVCTHKKELEQHDLFATGTTGYKLAAETGLKVEKYISGPLGGDQQIGAKISTGEIDVLIFFWDPFEPMPHDPDVKALLRIAAVWNIPVACNPASADFVITSPLIKQSYERQIPDYEAYIAERTKKL.

Residues 6–154 (GALPSRKQIA…AYIAERTKKL (149 aa)) enclose the MGS-like domain. Substrate contacts are provided by residues H19, K23, 45 to 48 (TGTT), and 65 to 66 (SG). The active-site Proton donor/acceptor is the D71. Position 98 (H98) interacts with substrate.

This sequence belongs to the methylglyoxal synthase family.

It carries out the reaction dihydroxyacetone phosphate = methylglyoxal + phosphate. In terms of biological role, catalyzes the formation of methylglyoxal from dihydroxyacetone phosphate. The sequence is that of Methylglyoxal synthase from Saccharophagus degradans (strain 2-40 / ATCC 43961 / DSM 17024).